The primary structure comprises 172 residues: MTLHVGAEPAPREDDTEDALREPELDLSVQYGDEITSDVRKTLPKRKLIAEWIEPALFASAQLTVRFVGEEEGRTLNAGYRHKDYPTNVLTFAYDAAPDGTVIGDLVLCCPVVEKEAHEQGKPLTAHYAHLLVHGALHAQGYDHETSDEDAAEMEALEVDILAKLGFPNPYQ.

The disordered stretch occupies residues 1–21; the sequence is MTLHVGAEPAPREDDTEDALR. Residues 10–21 show a composition bias toward basic and acidic residues; it reads APREDDTEDALR. Zn(2+) contacts are provided by histidine 134, histidine 138, and histidine 144.

The protein belongs to the endoribonuclease YbeY family. The cofactor is Zn(2+).

The protein localises to the cytoplasm. In terms of biological role, single strand-specific metallo-endoribonuclease involved in late-stage 70S ribosome quality control and in maturation of the 3' terminus of the 16S rRNA. The sequence is that of Endoribonuclease YbeY from Burkholderia lata (strain ATCC 17760 / DSM 23089 / LMG 22485 / NCIMB 9086 / R18194 / 383).